The chain runs to 343 residues: Small ribosomal subunit biogenesis GTPase RsgA (343 aa).

Positions 116–275 (RGQLKPVAAN…LIDSPGIREF (160 aa)) constitute a CP-type G domain. Residues 163 to 166 (NKFD) and 217 to 225 (GQSGVGKSS) each bind GTP. The Zn(2+) site is built by Cys299, Cys304, His306, and Cys312.

This sequence belongs to the TRAFAC class YlqF/YawG GTPase family. RsgA subfamily. As to quaternary structure, monomer. Associates with 30S ribosomal subunit, binds 16S rRNA. The cofactor is Zn(2+).

It is found in the cytoplasm. Its function is as follows. One of several proteins that assist in the late maturation steps of the functional core of the 30S ribosomal subunit. Helps release RbfA from mature subunits. May play a role in the assembly of ribosomal proteins into the subunit. Circularly permuted GTPase that catalyzes slow GTP hydrolysis, GTPase activity is stimulated by the 30S ribosomal subunit. This chain is Small ribosomal subunit biogenesis GTPase RsgA, found in Pseudomonas fluorescens (strain SBW25).